The primary structure comprises 308 residues: Acetyl-coenzyme A carboxylase carboxyl transferase subunit alpha (308 aa).

The CoA carboxyltransferase C-terminal domain maps to 36-286 (ELEKEVSSVY…ESYFLKAFEE (251 aa)).

This sequence belongs to the AccA family. Acetyl-CoA carboxylase is a heterohexamer composed of biotin carboxyl carrier protein (AccB), biotin carboxylase (AccC) and two subunits each of ACCase subunit alpha (AccA) and ACCase subunit beta (AccD).

The protein localises to the cytoplasm. The enzyme catalyses N(6)-carboxybiotinyl-L-lysyl-[protein] + acetyl-CoA = N(6)-biotinyl-L-lysyl-[protein] + malonyl-CoA. Its pathway is lipid metabolism; malonyl-CoA biosynthesis; malonyl-CoA from acetyl-CoA: step 1/1. Functionally, component of the acetyl coenzyme A carboxylase (ACC) complex. First, biotin carboxylase catalyzes the carboxylation of biotin on its carrier protein (BCCP) and then the CO(2) group is transferred by the carboxyltransferase to acetyl-CoA to form malonyl-CoA. This Helicobacter hepaticus (strain ATCC 51449 / 3B1) protein is Acetyl-coenzyme A carboxylase carboxyl transferase subunit alpha.